A 939-amino-acid polypeptide reads, in one-letter code: Serine/threonine-protein kinase STE20 (939 aa).

Residues 1 to 87 form a disordered region; the sequence is MSNDPSAVSE…TNDDDNNVVS (87 aa). N-acetylserine is present on Ser-2. A compositionally biased stretch (polar residues) spans 44 to 57; the sequence is TTGTLNVNALQKGT. Phosphoserine is present on residues Ser-87 and Ser-165. Thr-167 bears the Phosphothreonine mark. A Phosphoserine modification is found at Ser-169. The segment covering 176–196 has biased composition (polar residues); that stretch reads NATVKHQQPVASSTVNSNKSS. 2 disordered regions span residues 176-299 and 311-331; these read NATV…LRMK and RNSQ…SSSI. Position 203 is a phosphothreonine (Thr-203). Residues 204–231 are compositionally biased toward polar residues; the sequence is PVSTPVISKPSMTTTPRQINSASHSLSN. A compositionally biased stretch (basic residues) spans 232–243; the sequence is PKHKQHKPKVKP. 2 stretches are compositionally biased toward low complexity: residues 251 to 283 and 320 to 330; these read KPVS…YSSS and SSSSNNSSSSS. The region spanning 337–350 is the CRIB domain; it reads ISTPYNAKHIHHVG. 2 disordered regions span residues 407 to 487 and 500 to 598; these read KTFN…SASA and NVSP…ERER. Composition is skewed to polar residues over residues 408–467 and 500–527; these read TFNT…SSAN and NVSP…SRNA. Position 418 is a phosphoserine (Ser-418). Residues 434–499 are BEM1-binding; the sequence is PSTSDSHNYG…IKSPVMNSAA (66 aa). 3 positions are modified to phosphoserine: Ser-502, Ser-547, and Ser-562. Residues 542–552 show a composition bias toward low complexity; sequence TKSKTSPIIST. Residues 569 to 578 show a composition bias toward polar residues; it reads ETVTTPTSKP. Position 573 is a phosphothreonine (Thr-573). Residues 584–597 are compositionally biased toward basic and acidic residues; sequence LSKELNEKKREERE. The residue at position 585 (Ser-585) is a Phosphoserine. The Protein kinase domain maps to 620–871; the sequence is YANLVKIGQG…ATELLHDEYI (252 aa). ATP is bound by residues 626–634 and Lys-649; that span reads IGQGASGGV. Asp-739 acts as the Proton acceptor in catalysis. Thr-773 bears the Phosphothreonine mark. Acidic residues predominate over residues 899-908; it reads ADEDNDDDND. A disordered region spans residues 899 to 939; it reads ADEDNDDDNDNEHINKTNNCDDNNDSKETVNLDVTEDDKQK. Position 924 is a phosphoserine (Ser-924). Thr-927 carries the phosphothreonine modification.

The protein belongs to the protein kinase superfamily. STE Ser/Thr protein kinase family. STE20 subfamily. As to quaternary structure, interacts with BEM1, CDC42, CLN2, STE4 and the 14-3-3 proteins BMH1 and BMH2. Post-translationally, autophosphorylated and phosphorylated by the CLN2-CDC28 complex in a cell cycle dependent manner. Autophosphorylated on serine residues.

The protein resides in the cytoplasm. The protein localises to the nucleus. It catalyses the reaction L-seryl-[protein] + ATP = O-phospho-L-seryl-[protein] + ADP + H(+). It carries out the reaction L-threonyl-[protein] + ATP = O-phospho-L-threonyl-[protein] + ADP + H(+). Its function is as follows. MAP4K component of the MAPK pathway required for the mating pheromone response, haploid invasive growth and diploid pseudohyphal development. Links the pheromone response G-protein beta gamma subunits to downstream signaling components. Needed for mating in haploid cells, induction of a mating-specific gene FUS1, induction of mating-specific morphologies, and pheromone-induced proliferation arrest. Required for the regulation of the actin polarization and bud emergence during cell cycle in G1. Involved in the high osmolarity glycerol (HOG) response. Phosphorylates 'Thr-307' and 'Ser-302' or 'Ser-306' of STE11 and 'Ser-357' of MYO3. Phosphorylates histone H2B to form H2BS10ph during meiosis and H(2)O(2)-induced apoptosis. Its interaction with CDC42 is required for both invasive growth and the formation of pseudohyphae. Its interaction with STE4 is required for the pheromone signaling. In Saccharomyces cerevisiae (strain ATCC 204508 / S288c) (Baker's yeast), this protein is Serine/threonine-protein kinase STE20 (STE20).